The chain runs to 217 residues: Probable transaldolase (217 aa).

Residue lysine 83 is the Schiff-base intermediate with substrate of the active site.

This sequence belongs to the transaldolase family. Type 3B subfamily.

The protein localises to the cytoplasm. It carries out the reaction D-sedoheptulose 7-phosphate + D-glyceraldehyde 3-phosphate = D-erythrose 4-phosphate + beta-D-fructose 6-phosphate. The protein operates within carbohydrate degradation; pentose phosphate pathway; D-glyceraldehyde 3-phosphate and beta-D-fructose 6-phosphate from D-ribose 5-phosphate and D-xylulose 5-phosphate (non-oxidative stage): step 2/3. Its function is as follows. Transaldolase is important for the balance of metabolites in the pentose-phosphate pathway. The protein is Probable transaldolase of Chelativorans sp. (strain BNC1).